Consider the following 219-residue polypeptide: UPF0502 protein GSU0233 (219 aa).

The protein belongs to the UPF0502 family.

This Geobacter sulfurreducens (strain ATCC 51573 / DSM 12127 / PCA) protein is UPF0502 protein GSU0233.